A 638-amino-acid chain; its full sequence is Probable inactive receptor kinase At4g23740 (638 aa).

The signal sequence occupies residues 1–24 (MEALRIYLWSLCLSLCLIIYGANS). LRR repeat units lie at residues 94–117 (ALRVLSLRSNLISGEFPKDFVELK), 118–139 (DLAFLYLQDNNLSGPLPLDFSV), 142–165 (NLTSVNLSNNGFNGTIPSSLSRLK), 166–188 (RIQSLNLANNTLSGDIPDLSVLS), and 189–198 (SLQHIDLSNN). A helical membrane pass occupies residues 257-277 (VFLLIVIAVSIVVITALAFVL). Residues 337-608 (RASAEVLGKG…SDLVRLIENV (272 aa)) form the Protein kinase domain. Serine 339 carries the post-translational modification Phosphoserine. An ATP-binding site is contributed by 343–351 (LGKGTFGTT). Threonine 360 is modified (phosphothreonine). Lysine 365 contacts ATP. Phosphoserine is present on residues serine 416 and serine 419. Threonine 436 and threonine 509 each carry phosphothreonine. Phosphoserine is present on serine 513. The segment at 612–638 (RTSIEPEPELKPKSENGASETSTPSEI) is disordered. Residues 613 to 625 (TSIEPEPELKPKS) show a composition bias toward basic and acidic residues. Over residues 627 to 638 (NGASETSTPSEI) the composition is skewed to polar residues.

Belongs to the protein kinase superfamily.

It is found in the membrane. In Arabidopsis thaliana (Mouse-ear cress), this protein is Probable inactive receptor kinase At4g23740.